The following is a 396-amino-acid chain: MNDNPVRNFAINFGPQHPAAHGVLRLVLELDGEVVERVDPHIGLLHRGTEKLMEARTYLQNVPYFDRLDYVAPMNQEHAFCLAIEKLLGIEVPRRGQLLRVLWCEIGRILSHLLNVTTQAMDVGALTPPLWGFEEREKLMVFYERASGARMHANYFRPGGVHIDCPQQLIDDIGAWCDPFLKVCDDLNDLFIENRIFKQRNVDIGVISLEDCWRWGFSGVMVRGSGAAWDLRKAQPYECYEEMDFDIPVGRHGDNYDRQVIRMEEMRQSTKIMKQCVEKLSQASGKGPVATPQHKVVPPSRAEMKRSMEALIHHFKLYTEGFHVPAGEVYCGVEAPKGEFGVYLVSDGTDKPYRCKIRAPGFAHLSAMDFLCRKSMLADVSAILGSLDIVFGEVDR.

The protein belongs to the complex I 49 kDa subunit family. As to quaternary structure, NDH-1 is composed of 14 different subunits. Subunits NuoB, C, D, E, F, and G constitute the peripheral sector of the complex.

Its subcellular location is the cell inner membrane. It catalyses the reaction a quinone + NADH + 5 H(+)(in) = a quinol + NAD(+) + 4 H(+)(out). Functionally, NDH-1 shuttles electrons from NADH, via FMN and iron-sulfur (Fe-S) centers, to quinones in the respiratory chain. The immediate electron acceptor for the enzyme in this species is believed to be ubiquinone. Couples the redox reaction to proton translocation (for every two electrons transferred, four hydrogen ions are translocated across the cytoplasmic membrane), and thus conserves the redox energy in a proton gradient. This chain is NADH-quinone oxidoreductase subunit D 1, found in Beijerinckia indica subsp. indica (strain ATCC 9039 / DSM 1715 / NCIMB 8712).